Consider the following 179-residue polypeptide: Large ribosomal subunit protein uL5 (179 aa).

This sequence belongs to the universal ribosomal protein uL5 family. As to quaternary structure, part of the 50S ribosomal subunit; part of the 5S rRNA/L5/L18/L25 subcomplex. Contacts the 5S rRNA and the P site tRNA. Forms a bridge to the 30S subunit in the 70S ribosome.

Functionally, this is one of the proteins that bind and probably mediate the attachment of the 5S RNA into the large ribosomal subunit, where it forms part of the central protuberance. In the 70S ribosome it contacts protein S13 of the 30S subunit (bridge B1b), connecting the 2 subunits; this bridge is implicated in subunit movement. Contacts the P site tRNA; the 5S rRNA and some of its associated proteins might help stabilize positioning of ribosome-bound tRNAs. This chain is Large ribosomal subunit protein uL5, found in Shewanella baltica (strain OS223).